The sequence spans 334 residues: N-acetyl-gamma-glutamyl-phosphate reductase (334 aa).

The active site involves Cys-154.

This sequence belongs to the NAGSA dehydrogenase family. Type 1 subfamily.

The protein localises to the cytoplasm. It carries out the reaction N-acetyl-L-glutamate 5-semialdehyde + phosphate + NADP(+) = N-acetyl-L-glutamyl 5-phosphate + NADPH + H(+). It participates in amino-acid biosynthesis; L-arginine biosynthesis; N(2)-acetyl-L-ornithine from L-glutamate: step 3/4. Catalyzes the NADPH-dependent reduction of N-acetyl-5-glutamyl phosphate to yield N-acetyl-L-glutamate 5-semialdehyde. The sequence is that of N-acetyl-gamma-glutamyl-phosphate reductase from Escherichia coli O6:H1 (strain CFT073 / ATCC 700928 / UPEC).